The chain runs to 199 residues: Holliday junction branch migration complex subunit RuvA (199 aa).

The interval 1–65 (MIGWLHGQII…EDALLLYGFL (65 aa)) is domain I. The domain II stretch occupies residues 66–144 (DKEERSLFRS…QFDGSVSDTF (79 aa)). Residues 144-148 (FQKQA) are flexible linker. The segment at 149–199 (GSTHSQQEAISALEALGYKPQEAWKVMNKIDNGNKSCEQLIREALQILSSR) is domain III.

Belongs to the RuvA family. Homotetramer. Forms an RuvA(8)-RuvB(12)-Holliday junction (HJ) complex. HJ DNA is sandwiched between 2 RuvA tetramers; dsDNA enters through RuvA and exits via RuvB. An RuvB hexamer assembles on each DNA strand where it exits the tetramer. Each RuvB hexamer is contacted by two RuvA subunits (via domain III) on 2 adjacent RuvB subunits; this complex drives branch migration. In the full resolvosome a probable DNA-RuvA(4)-RuvB(12)-RuvC(2) complex forms which resolves the HJ.

Its subcellular location is the cytoplasm. Functionally, the RuvA-RuvB-RuvC complex processes Holliday junction (HJ) DNA during genetic recombination and DNA repair, while the RuvA-RuvB complex plays an important role in the rescue of blocked DNA replication forks via replication fork reversal (RFR). RuvA specifically binds to HJ cruciform DNA, conferring on it an open structure. The RuvB hexamer acts as an ATP-dependent pump, pulling dsDNA into and through the RuvAB complex. HJ branch migration allows RuvC to scan DNA until it finds its consensus sequence, where it cleaves and resolves the cruciform DNA. The sequence is that of Holliday junction branch migration complex subunit RuvA from Legionella pneumophila subsp. pneumophila (strain Philadelphia 1 / ATCC 33152 / DSM 7513).